The primary structure comprises 55 residues: Large ribosomal subunit protein bL33 (55 aa).

It belongs to the bacterial ribosomal protein bL33 family.

This is Large ribosomal subunit protein bL33 from Buchnera aphidicola subsp. Acyrthosiphon pisum (strain 5A).